We begin with the raw amino-acid sequence, 105 residues long: Large ribosomal subunit protein eL36 (105 aa).

This sequence belongs to the eukaryotic ribosomal protein eL36 family. As to quaternary structure, component of the large ribosomal subunit.

It localises to the cytoplasm. Its subcellular location is the cytosol. Functionally, component of the large ribosomal subunit. The ribosome is a large ribonucleoprotein complex responsible for the synthesis of proteins in the cell. This chain is Large ribosomal subunit protein eL36 (rpl36), found in Danio rerio (Zebrafish).